Consider the following 71-residue polypeptide: Plasticin-C2 (71 aa).

An N-terminal signal peptide occupies residues methionine 1–cysteine 22. The propeptide occupies glutamate 23–arginine 45. The interval glutamate 25–glycine 46 is disordered. Over residues lysine 26–glutamine 40 the composition is skewed to acidic residues. Asparagine 68 bears the Asparagine amide mark. Residues glutamate 70–serine 71 constitute a propeptide that is removed on maturation.

This sequence belongs to the frog skin active peptide (FSAP) family. Plasticin subfamily. In terms of tissue distribution, expressed by the skin glands.

It is found in the secreted. The protein localises to the target cell membrane. In terms of biological role, neutral peptide with no antimicrobial activity. May act in synergy with cationic peptides by enhancing their activity. Has a moderate hemolytic activity. The protein is Plasticin-C2 of Agalychnis callidryas (Red-eyed tree frog).